The chain runs to 625 residues: Enolase 4 (625 aa).

The interval 184-226 (YSTVPTPLPPVPPPPPPPPPTKKKGQKPGRKDTITEKPIAPAE) is disordered. Positions 189–203 (TPLPPVPPPPPPPPP) are enriched in pro residues. Residue Val-300 participates in substrate binding. The tract at residues 331–350 (PSPPKAETKKGHDGSKRGQQ) is disordered. Residues 336–346 (AETKKGHDGSK) are compositionally biased toward basic and acidic residues. Asn-497 serves as the catalytic Proton acceptor. Gly-548 is a binding site for substrate. The disordered stretch occupies residues 604 to 625 (PLVPTFPTQGVEESAETGASSG).

The protein belongs to the enolase family. Interacts with ENO1 and AKAP4. Post-translationally, synthesized as an approximately 70-kDa precursor, which then undergoes proteolytic cleavage to an approximately 60-kDa enzyme; HOATZ associates directly or indirectly with ENO4 to mediate this process before its transport to mature flagella.

The enzyme catalyses (2R)-2-phosphoglycerate = phosphoenolpyruvate + H2O. Its pathway is carbohydrate degradation; glycolysis; pyruvate from D-glyceraldehyde 3-phosphate: step 4/5. Its function is as follows. May be required for sperm motility and function. The polypeptide is Enolase 4 (Homo sapiens (Human)).